We begin with the raw amino-acid sequence, 133 residues long: Small ribosomal subunit protein uS9 (133 aa).

Over residues 102-113 (KVEGYLSRDPRA) the composition is skewed to basic and acidic residues. The segment at 102 to 133 (KVEGYLSRDPRAKERRKYGLKKARKAPQFSKR) is disordered. The segment covering 114–133 (KERRKYGLKKARKAPQFSKR) has biased composition (basic residues).

It belongs to the universal ribosomal protein uS9 family.

In Gloeobacter violaceus (strain ATCC 29082 / PCC 7421), this protein is Small ribosomal subunit protein uS9.